Consider the following 342-residue polypeptide: Phenylalanine--tRNA ligase alpha subunit (342 aa).

Mg(2+) is bound at residue E260.

It belongs to the class-II aminoacyl-tRNA synthetase family. Phe-tRNA synthetase alpha subunit type 1 subfamily. In terms of assembly, tetramer of two alpha and two beta subunits. Mg(2+) serves as cofactor.

It is found in the cytoplasm. The catalysed reaction is tRNA(Phe) + L-phenylalanine + ATP = L-phenylalanyl-tRNA(Phe) + AMP + diphosphate + H(+). The chain is Phenylalanine--tRNA ligase alpha subunit from Nocardia farcinica (strain IFM 10152).